A 404-amino-acid polypeptide reads, in one-letter code: Corticosteroid-binding globulin (404 aa).

The N-terminal stretch at 1–22 is a signal peptide; it reads MLPTLYTCLLWLSTSGLWTVQA. 3 N-linked (GlcNAc...) asparagine glycosylation sites follow: Asn95, Asn119, and Asn175. Gln253 serves as a coordination point for cortisol. An N-linked (GlcNAc...) asparagine glycan is attached at Asn259. Gln285 provides a ligand contact to cortisol. The N-linked (GlcNAc...) asparagine glycan is linked to Asn326. Trp392 is a binding site for cortisol.

This sequence belongs to the serpin family. Post-translationally, glycosylation in position Asn-259 is needed for steroid binding.

The protein localises to the secreted. Major transport protein for glucocorticoids and progestins in the blood of almost all vertebrate species. This Bos taurus (Bovine) protein is Corticosteroid-binding globulin (SERPINA6).